We begin with the raw amino-acid sequence, 397 residues long: DNA-binding protein (397 aa).

C116 and H118 together coordinate Zn(2+). Residues 129–161 are flexible loop; it reads IEMAATSESGVAALKEGRGAVEINRWGRQVVKI. Positions 169, 185, 225, 227, 276, and 289 each coordinate Zn(2+). The segment at 335 to 397 is C-terminal arm, DBP binding; it reads ALLPEGSVNE…IVLESSEEDE (63 aa). Residues 338-397 are disordered; sequence PEGSVNEDENPFGLDNSEDEEEVVPPSPPSPARKRTRTTVAEVHHKKKKKIVLESSEEDE. Residues 342 to 360 show a composition bias toward acidic residues; the sequence is VNEDENPFGLDNSEDEEEV.

The protein belongs to the adenoviridae E2A DNA-binding protein family. Homomultimerizes on viral ssDNA bound to pTP. Forms a initiation complex with viral polymerase, pTP and hosts NFIA and POU2F1/OCT1. Interacts with host SRCAP.

The protein localises to the host nucleus. Functionally, plays a role in the elongation phase of viral strand displacement replication by unwinding the template in an ATP-independent fashion, employing its capacity to form multimers. Also enhances the rate of initiation. Released from template upon second strand synthesis. Assembles in complex with viral pTP, viral pol, host NFIA and host POU2F1/OCT1 on viral origin of replication. Covers the whole ssDNA genome during synthesis. The complementary strand synthesis induces its relese from DNA template. May inhibit cellular transcription mediated by the interaction between host SRCAP and CBP. The protein is DNA-binding protein of Snake adenovirus serotype 1 (SnAdV-1).